The sequence spans 191 residues: Probable GTP-binding protein EngB (191 aa).

The EngB-type G domain occupies 19–188; it reads NIPEICFMGR…HKKIFELFVE (170 aa). GTP contacts are provided by residues 27-34, 53-57, 70-73, 136-139, and 167-169; these read GRSNVGKS, GRTQL, DLPG, NKFD, and AST. 2 residues coordinate Mg(2+): Ser34 and Thr55.

This sequence belongs to the TRAFAC class TrmE-Era-EngA-EngB-Septin-like GTPase superfamily. EngB GTPase family. The cofactor is Mg(2+).

Functionally, necessary for normal cell division and for the maintenance of normal septation. This chain is Probable GTP-binding protein EngB, found in Mycoplasma genitalium (strain ATCC 33530 / DSM 19775 / NCTC 10195 / G37) (Mycoplasmoides genitalium).